The chain runs to 77 residues: Probable [Fe-S]-dependent transcriptional repressor (77 aa).

4 residues coordinate iron-sulfur cluster: C54, C59, C62, and C68.

The protein belongs to the FeoC family.

May function as a transcriptional regulator that controls feoABC expression. The protein is Probable [Fe-S]-dependent transcriptional repressor of Proteus mirabilis (strain HI4320).